We begin with the raw amino-acid sequence, 715 residues long: Fatty acid oxidation complex subunit alpha (715 aa).

Residues 1-189 form an enoyl-CoA hydratase/isomerase region; it reads MIYQGETLTV…KVGAIDAVVA (189 aa). Asp296 lines the substrate pocket. Residues 311 to 715 are 3-hydroxyacyl-CoA dehydrogenase; that stretch reads AKATSHAAVL…EMAAQGKTFY (405 aa). NAD(+)-binding positions include Met325, Asp344, 401–403, Lys408, and Ser430; that span reads VVE. His451 acts as the For 3-hydroxyacyl-CoA dehydrogenase activity in catalysis. NAD(+) is bound at residue Asn454. Positions 501 and 661 each coordinate substrate.

It in the N-terminal section; belongs to the enoyl-CoA hydratase/isomerase family. In the C-terminal section; belongs to the 3-hydroxyacyl-CoA dehydrogenase family. As to quaternary structure, heterotetramer of two alpha chains (FadB) and two beta chains (FadA).

It catalyses the reaction a (3S)-3-hydroxyacyl-CoA + NAD(+) = a 3-oxoacyl-CoA + NADH + H(+). The enzyme catalyses a (3S)-3-hydroxyacyl-CoA = a (2E)-enoyl-CoA + H2O. The catalysed reaction is a 4-saturated-(3S)-3-hydroxyacyl-CoA = a (3E)-enoyl-CoA + H2O. It carries out the reaction (3S)-3-hydroxybutanoyl-CoA = (3R)-3-hydroxybutanoyl-CoA. It catalyses the reaction a (3Z)-enoyl-CoA = a 4-saturated (2E)-enoyl-CoA. The enzyme catalyses a (3E)-enoyl-CoA = a 4-saturated (2E)-enoyl-CoA. The protein operates within lipid metabolism; fatty acid beta-oxidation. In terms of biological role, involved in the aerobic and anaerobic degradation of long-chain fatty acids via beta-oxidation cycle. Catalyzes the formation of 3-oxoacyl-CoA from enoyl-CoA via L-3-hydroxyacyl-CoA. It can also use D-3-hydroxyacyl-CoA and cis-3-enoyl-CoA as substrate. This Aeromonas hydrophila subsp. hydrophila (strain ATCC 7966 / DSM 30187 / BCRC 13018 / CCUG 14551 / JCM 1027 / KCTC 2358 / NCIMB 9240 / NCTC 8049) protein is Fatty acid oxidation complex subunit alpha.